A 231-amino-acid chain; its full sequence is Orotidine 5'-phosphate decarboxylase (231 aa).

Substrate-binding positions include Asp-11, Lys-34, 61–70 (DLKLHDIPNT), Thr-117, Arg-179, Gln-188, Gly-208, and Arg-209. Lys-63 acts as the Proton donor in catalysis.

It belongs to the OMP decarboxylase family. Type 1 subfamily. As to quaternary structure, homodimer.

The catalysed reaction is orotidine 5'-phosphate + H(+) = UMP + CO2. It functions in the pathway pyrimidine metabolism; UMP biosynthesis via de novo pathway; UMP from orotate: step 2/2. Catalyzes the decarboxylation of orotidine 5'-monophosphate (OMP) to uridine 5'-monophosphate (UMP). This is Orotidine 5'-phosphate decarboxylase from Streptococcus suis (strain 98HAH33).